The sequence spans 80 residues: MITKNYLIDKIHDKLNCLSKEDVKDSVDLILDYLNESLKKQKRIEIRNFGNFSIRKRKFPESEKFYNTVYYRMPKNLFKE.

The protein belongs to the bacterial histone-like protein family.

In terms of biological role, histone-like DNA-binding protein which is capable of wrapping DNA to stabilize it, and thus to prevent its denaturation under extreme environmental conditions. This chain is DNA-binding protein HU-like, found in Rickettsia conorii (strain ATCC VR-613 / Malish 7).